An 80-amino-acid polypeptide reads, in one-letter code: Small ribosomal subunit protein bS16 (80 aa).

It belongs to the bacterial ribosomal protein bS16 family.

This Wigglesworthia glossinidia brevipalpis protein is Small ribosomal subunit protein bS16.